A 133-amino-acid polypeptide reads, in one-letter code: MIKRAAAAAIGGALAVAAVPAVLGAVGFTGAGIAASSLAAKMMSAAAVANGGGVAAGSLVATLQSVGAAGLSTSSNILLGSIGSAFGALLGGAKRASPSPPPGGPRPEGEQPGENVPQVEPPKSPLGPEKHEK.

The next 3 membrane-spanning stretches (helical) occupy residues Ala8 to Phe28, Gly51 to Leu71, and Thr73 to Ala93. Residues Ala93–Lys133 are disordered.

Belongs to the IFI6/IFI27 family.

The protein resides in the mitochondrion membrane. Functionally, plays a role in the apoptotic process and has a pro-apoptotic activity. This is Interferon alpha-inducible protein 27-like protein 2 from Bos taurus (Bovine).